We begin with the raw amino-acid sequence, 388 residues long: Alcohol dehydrogenase patD (388 aa).

Cysteine 46 contacts Zn(2+). Histidine 47 contacts NAD(+). Histidine 67, glutamate 68, cysteine 101, cysteine 104, and cysteine 112 together coordinate Zn(2+). Histidine 67 lines the substrate pocket. Residues 198 to 203, 295 to 297, and 320 to 322 each bind NAD(+); these read VALSRG, SLL, and EEA.

It belongs to the zinc-containing alcohol dehydrogenase family. Requires Zn(2+) as cofactor.

It is found in the cytoplasm. The protein localises to the cytosol. The enzyme catalyses neopatulin + NADPH + H(+) = (E)-ascladiol + NADP(+). It functions in the pathway mycotoxin biosynthesis; patulin biosynthesis. In terms of biological role, alcohol dehydrogenase; part of the gene cluster that mediates the biosynthesis of patulin, an acetate-derived tetraketide mycotoxin produced by several fungal species that shows antimicrobial properties against several bacteria. PatD catalyzes the conversion of neopatulin into E-ascladiol. The pathway begins with the synthesis of 6-methylsalicylic acid by the polyketide synthase (PKS) patK via condensation of acetate and malonate units. The 6-methylsalicylic acid decarboxylase patG then catalyzes the decarboxylation of 6-methylsalicylic acid to yield m-cresol (also known as 3-methylphenol). These first reactions occur in the cytosol. The intermediate m-cresol is then transported into the endoplasmic reticulum where the cytochrome P450 monooxygenase patH converts it to m-hydroxybenzyl alcohol, which is further converted to gentisyl alcohol by the cytochrome P450 monooxygenase patI. The oxidoreductases patJ and patO further convert gentisyl alcohol to isoepoxydon in the vacuole. PatN catalyzes then the transformation of isoepoxydon into phyllostine. The cluster protein patF is responsible for the conversion from phyllostine to neopatulin whereas the alcohol dehydrogenase patD converts neopatulin to E-ascladiol. The steps between isoepoxydon and E-ascladiol occur in the cytosol, and E-ascladiol is probably secreted to the extracellular space by one of the cluster-specific transporters patC or patM. Finally, the secreted patulin synthase patE catalyzes the conversion of E-ascladiol to patulin. This is Alcohol dehydrogenase patD from Aspergillus clavatus (strain ATCC 1007 / CBS 513.65 / DSM 816 / NCTC 3887 / NRRL 1 / QM 1276 / 107).